We begin with the raw amino-acid sequence, 260 residues long: Coiled-coil domain-containing protein 127 (260 aa).

The stretch at 47 to 135 forms a coiled coil; sequence ESQKEIEKAR…QIIQEKSQRQ (89 aa).

This chain is Coiled-coil domain-containing protein 127 (Ccdc127), found in Rattus norvegicus (Rat).